The following is a 575-amino-acid chain: Glycine--tRNA ligase (575 aa).

Residues arginine 96 and glutamate 162 each contribute to the substrate site. Residues 194–196 (RNE), 204–209 (IRLREF), 327–328 (EC), and 450–453 (GIDR) contribute to the ATP site. 209-213 (FTQAE) contributes to the substrate binding site. 446 to 450 (EPSYG) lines the substrate pocket.

This sequence belongs to the class-II aminoacyl-tRNA synthetase family.

It is found in the cytoplasm. It catalyses the reaction tRNA(Gly) + glycine + ATP = glycyl-tRNA(Gly) + AMP + diphosphate. In terms of biological role, catalyzes the attachment of glycine to tRNA(Gly). This chain is Glycine--tRNA ligase, found in Methanococcus maripaludis (strain C5 / ATCC BAA-1333).